Here is a 258-residue protein sequence, read N- to C-terminus: MDFLNAVILGIVEGLTEFLPVSSTGHMILSAKLLGLEQTSVLKCFEVVIQLGSILAVVFMFFDRLKEDFNLWIKLAIGFVPTAIIGFLAYKHIKTFFEPSTVAYMLIIGGIVFIVVELWHKKINYEGDTKTLHEVSFKQAFIIGLSQCFAMIPGTSRSGSTIITGLLCGLSREVAARFSFLLAIPTMFAATAYDSYKNADIFVQNKEALWIFLVGGFMAFIVALIVIKLFLKFVSKFSYISFGIYRIILGSIFLIYIL.

Transmembrane regions (helical) follow at residues 1-21 (MDFL…FLPV), 42-62 (LKCF…FMFF), 69-89 (FNLW…GFLA), 96-116 (FFEP…FIVV), 135-155 (VSFK…IPGT), 173-193 (EVAA…ATAY), 211-231 (IFLV…KLFL), and 237-257 (FSYI…LIYI).

It belongs to the UppP family.

The protein resides in the cell inner membrane. The catalysed reaction is di-trans,octa-cis-undecaprenyl diphosphate + H2O = di-trans,octa-cis-undecaprenyl phosphate + phosphate + H(+). Catalyzes the dephosphorylation of undecaprenyl diphosphate (UPP). Confers resistance to bacitracin. This is Undecaprenyl-diphosphatase from Campylobacter fetus subsp. fetus (strain 82-40).